Reading from the N-terminus, the 37-residue chain is Large ribosomal subunit protein bL36 (37 aa).

The protein belongs to the bacterial ribosomal protein bL36 family.

This Aromatoleum aromaticum (strain DSM 19018 / LMG 30748 / EbN1) (Azoarcus sp. (strain EbN1)) protein is Large ribosomal subunit protein bL36.